Consider the following 226-residue polypeptide: Probable proteasome subunit beta type-7 (226 aa).

It belongs to the peptidase T1B family. As to quaternary structure, the 26S proteasome consists of a 20S proteasome core and two 19S regulatory subunits. The 20S proteasome core is composed of 28 subunits that are arranged in four stacked rings, resulting in a barrel-shaped structure. The two end rings are each formed by seven alpha subunits, and the two central rings are each formed by seven beta subunits. The catalytic chamber with the active sites is on the inside of the barrel.

The protein resides in the cytoplasm. It is found in the nucleus. Its function is as follows. Non-catalytic component of the proteasome which degrades poly-ubiquitinated proteins in the cytoplasm and in the nucleus. It is essential for the regulated turnover of proteins and for the removal of misfolded proteins. The proteasome is a multicatalytic proteinase complex that is characterized by its ability to cleave peptides with Arg, Phe, Tyr, Leu, and Glu adjacent to the leaving group at neutral or slightly basic pH. It has an ATP-dependent proteolytic activity. The chain is Probable proteasome subunit beta type-7 (PRE4) from Encephalitozoon cuniculi (strain GB-M1) (Microsporidian parasite).